Reading from the N-terminus, the 617-residue chain is Protein 4.1 (617 aa).

The FERM domain maps to M1–S282. Y13 bears the Phosphotyrosine mark. Phosphothreonine is present on T169. Residues T308 to K401 form a disordered region. Residues S312, S331, and S333 each carry the phosphoserine modification. Low complexity predominate over residues R348–A361. Positions A387 to P396 are enriched in acidic residues. A spectrin--actin-binding region spans residues K401–P466. A Phosphotyrosine; by EGFR modification is found at Y413. Phosphoserine occurs at positions 417, 427, 437, and 462. Position 465 is a phosphoserine; by CDK1 (S465). Positions F467–E617 are C-terminal (CTD). A phosphothreonine mark is found at T489 and T612.

In terms of assembly, binds with a high affinity to glycophorin and with lower affinity to band III protein. Associates with the nuclear mitotic apparatus. Binds calmodulin, CPAP and DLG1. Also found to associate with contractile apparatus and tight junctions. Interacts with NUMA1; this interaction is negatively regulated by CDK1 during metaphase and promotes anaphase-specific localization of NUMA1 in symmetrically dividing cells. Interacts with ATP2B1; regulates small intestinal calcium absorption through regulation of membrane expression of ATP2B1. In terms of processing, phosphorylated at multiple sites by different protein kinases and each phosphorylation event selectively modulates the protein's functions. Phosphorylation on Tyr-413 reduces the ability of 4.1 to promote the assembly of the spectrin/actin/4.1 ternary complex.

The protein localises to the nucleus. The protein resides in the cytoplasm. Its subcellular location is the cytoskeleton. It localises to the cell cortex. In terms of biological role, protein 4.1 is a major structural element of the erythrocyte membrane skeleton. It plays a key role in regulating membrane physical properties of mechanical stability and deformability by stabilizing spectrin-actin interaction. Recruits DLG1 to membranes. Required for dynein-dynactin complex and NUMA1 recruitment at the mitotic cell cortex during anaphase. The protein is Protein 4.1 of Bos taurus (Bovine).